The chain runs to 401 residues: MREAFICDGIRTPIGRYGGALSSVRADDLAAIPLRELLVRNPRLDAECIDDVILGCANQAGEDNRNVARMATLLAGLPQSVSGTTINRLCGSGLDALGFAARAIKAGDGDLLIAGGVESMSRAPFVMGKAASAFSRQAEMFDTTIGWRFVNPLMAQQFGTDSMPETAENVAELLKISREDQDSFALRSQQRTAKAQSSGILAEEIVPVVLKNKKGVVTEIQHDEHLRPETTLEQLRGLKAPFRANGVITAGNASGVNDGAAALIIASEQMAAAQGLTPRARIVAMATAGVEPRLMGLGPVPATRRVLERAGLSIHDMDVIELNEAFAAQALGVLRELGLPDDAPHVNPNGGAIALGHPLGMSGARLALAASHELHRRNGRYALCTMCIGVGQGIAMILERV.

The Acyl-thioester intermediate role is filled by Cys90. Active-site proton acceptor residues include His357 and Cys387.

This sequence belongs to the thiolase-like superfamily. Thiolase family.

The enzyme catalyses succinyl-CoA + acetyl-CoA = 3-oxoadipyl-CoA + CoA. The catalysed reaction is 2,3-didehydroadipoyl-CoA + acetyl-CoA = 3-oxo-5,6-didehydrosuberyl-CoA + CoA. It participates in aromatic compound metabolism; phenylacetate degradation. Catalyzes the thiolytic cleavage of the beta-keto C8 intermediate 3-oxo-5,6-dehydrosuberyl-CoA with CoA to yield the C6 intermediate 2,3-dehydroadipyl-CoA and acetyl-CoA. Besides it catalyzes also the last step of the pathway, in which 3-oxoadipyl-CoA similarly is cleaved to acetyl-CoA and succinyl-CoA. This is 3-oxoadipyl-CoA/3-oxo-5,6-dehydrosuberyl-CoA thiolase (paaJ) from Escherichia coli (strain K12).